We begin with the raw amino-acid sequence, 751 residues long: Collagen alpha-1(XIII) chain (751 aa).

Residues 1-24 form a disordered region; it reads MVAERTRKAAASGSRGPGELGAPG. Residues 1–40 lie on the Cytoplasmic side of the membrane; it reads MVAERTRKAAASGSRGPGELGAPGPGTVALAEQCARLPSP. Positions 1-119 are nonhelical region 1 (NC1); the sequence is MVAERTRKAA…KMSPGCNCPP (119 aa). Residues 15-24 show a composition bias toward gly residues; that stretch reads RGPGELGAPG. A helical; Signal-anchor for type II membrane protein membrane pass occupies residues 41–59; the sequence is GCCGLLALALCSLALSLLA. The Extracellular segment spans residues 60–751; the sequence is HFRTAELQAR…GLPVQGCWNK (692 aa). Disordered stretches follow at residues 108-127, 190-225, and 265-449; these read APKM…PTGR, PGHP…EYPH, and TFQG…EMVD. Positions 116 to 125 are enriched in pro residues; sequence NCPPGPPGPT. The interval 120–223 is triple-helical region 1 (COL1); the sequence is GPPGPTGRPG…KGEKGQCGEY (104 aa). Residues 204–213 show a composition bias toward low complexity; it reads PRGQPGPQGQ. Positions 214–225 are enriched in basic and acidic residues; it reads KGEKGQCGEYPH. Residues 224–273 are nonhelical region 2 (NC2); the sequence is PHREYPGGMLAALRSNPIMSLKLLPLLNSVRLAPPPVIKRRTFQGEQSQT. The segment at 274–445 is triple-helical region 2 (COL2); sequence GIQGPPGPPG…KGAKGEPGKG (172 aa). 3 stretches are compositionally biased toward pro residues: residues 278–288, 296–312, and 391–402; these read PPGPPGPPGPS, LPGP…PGPK, and PGPPGLPGPPGP. Positions 403 to 436 are enriched in low complexity; that stretch reads KGEAGVDGQAGPPGQQGDKGQPGAAGEQGPSGPK. The segment covering 438–447 has biased composition (basic and acidic residues); the sequence is AKGEPGKGEM. The segment at 446-467 is nonhelical region 3 (NC3); that stretch reads EMVDYNGSINEALQEIRTLALM. A glycan (N-linked (GlcNAc...) asparagine) is linked at Asn451. The tract at residues 466 to 751 is disordered; sequence LMGPPGLPGQ…GLPVQGCWNK (286 aa). Positions 468–733 are triple-helical region 3 (COL3); it reads GPPGLPGQTG…KGDQGAPGLD (266 aa). Positions 470 to 484 are enriched in pro residues; it reads PGLPGQTGPPGPPGT. 3 stretches are compositionally biased toward basic and acidic residues: residues 499–509, 557–568, and 586–596; these read HDGDKGPRGKP, TGEKGEPGDEGR, and EKGEAGEKGDP. Over residues 601 to 613 the composition is skewed to pro residues; sequence PGPPGPEGPPGPP. A compositionally biased stretch (low complexity) spans 615–628; sequence LQGFPGPKGEAGLE. The segment covering 630 to 643 has biased composition (basic and acidic residues); the sequence is SKGEKGSQGEKGDR. Residues 658–673 show a composition bias toward pro residues; it reads PGPPGTPGPIGVPGPA. Residues 684–699 are compositionally biased toward low complexity; sequence DPGMTGPTGAAGLPGL. Over residues 706–726 the composition is skewed to basic and acidic residues; that stretch reads KGNRGERGKKGSRGPKGDKGD. The interval 734–751 is nonhelical region 4 (NC4); the sequence is APCPLGEDGLPVQGCWNK.

Homotrimer; disulfide-linked. Nucleation of the type XIII collagen triple helix is likely to occur at the N-terminal region with triple helix formation proceeding from the N- to the C-terminus. Interacts with FN1, perlecan/HSPG2 and NID2.

It localises to the cell membrane. The protein resides in the postsynaptic cell membrane. In terms of biological role, involved in cell-matrix and cell-cell adhesion interactions that are required for normal development. May participate in the linkage between muscle fiber and basement membrane. May play a role in endochondral ossification of bone and branching morphogenesis of lung. Binds heparin. At neuromuscular junctions, may play a role in acetylcholine receptor clustering. This is Collagen alpha-1(XIII) chain from Mus musculus (Mouse).